We begin with the raw amino-acid sequence, 289 residues long: Phosphatidylglycerol--prolipoprotein diacylglyceryl transferase (289 aa).

The next 7 membrane-spanning stretches (helical) occupy residues 17 to 37 (LAVRWYGLMYLLGFACFILLG), 57 to 77 (MLFYGVLGVIVGGRLGHIFFY), 89 to 109 (IFAVWQGGMSFHGGFLGVIAA), 121 to 141 (WLVVTDFIAPLVPLGLGAGRI), 174 to 194 (QLYEFALEGLAFFTLMWIYSA), 200 to 220 (GAVSGMFLIGYGVFRSFAEFF), and 235 to 255 (ISMGQWLSLPMILAGVIMLVW). An a 1,2-diacyl-sn-glycero-3-phospho-(1'-sn-glycerol)-binding site is contributed by Arg140.

This sequence belongs to the Lgt family.

The protein localises to the cell inner membrane. The enzyme catalyses L-cysteinyl-[prolipoprotein] + a 1,2-diacyl-sn-glycero-3-phospho-(1'-sn-glycerol) = an S-1,2-diacyl-sn-glyceryl-L-cysteinyl-[prolipoprotein] + sn-glycerol 1-phosphate + H(+). The protein operates within protein modification; lipoprotein biosynthesis (diacylglyceryl transfer). Catalyzes the transfer of the diacylglyceryl group from phosphatidylglycerol to the sulfhydryl group of the N-terminal cysteine of a prolipoprotein, the first step in the formation of mature lipoproteins. This is Phosphatidylglycerol--prolipoprotein diacylglyceryl transferase from Nitrosospira multiformis (strain ATCC 25196 / NCIMB 11849 / C 71).